A 145-amino-acid chain; its full sequence is D-aminoacyl-tRNA deacylase (145 aa).

A Gly-cisPro motif, important for rejection of L-amino acids motif is present at residues 137–138 (GP).

The protein belongs to the DTD family. In terms of assembly, homodimer.

It localises to the cytoplasm. It carries out the reaction glycyl-tRNA(Ala) + H2O = tRNA(Ala) + glycine + H(+). It catalyses the reaction a D-aminoacyl-tRNA + H2O = a tRNA + a D-alpha-amino acid + H(+). Functionally, an aminoacyl-tRNA editing enzyme that deacylates mischarged D-aminoacyl-tRNAs. Also deacylates mischarged glycyl-tRNA(Ala), protecting cells against glycine mischarging by AlaRS. Acts via tRNA-based rather than protein-based catalysis; rejects L-amino acids rather than detecting D-amino acids in the active site. By recycling D-aminoacyl-tRNA to D-amino acids and free tRNA molecules, this enzyme counteracts the toxicity associated with the formation of D-aminoacyl-tRNA entities in vivo and helps enforce protein L-homochirality. In Pseudomonas aeruginosa (strain LESB58), this protein is D-aminoacyl-tRNA deacylase.